Here is a 257-residue protein sequence, read N- to C-terminus: MVIINTAAYHFVSITQPQTLADQIRAHGEIAGLKGTVLIANEGINLFLAGEKEAINAFYAWLCADVRFAALHVKYSVSAYKPFARFKVKVRPEIISFRRGDISPLQVRAPGVSAHTLRDWLRRGCDDNGRRLVMLDARNQQEIAYGTFSGAMTLPITKFTGFPGALAHYRDLLSDATVVSFCTGGIRCEKAVLWMRADGMDNVLQLEGGILGYFEQVGGEGYDGRCFVFDKRVALDPQLRPLYDMRVVASFARSEIS.

The region spanning 128–222 is the Rhodanese domain; the sequence is NGRRLVMLDA…YFEQVGGEGY (95 aa). C182 functions as the Cysteine persulfide intermediate in the catalytic mechanism.

Belongs to the TrhO family.

It carries out the reaction uridine(34) in tRNA + AH2 + O2 = 5-hydroxyuridine(34) in tRNA + A + H2O. Its function is as follows. Catalyzes oxygen-dependent 5-hydroxyuridine (ho5U) modification at position 34 in tRNAs. This Xylella fastidiosa (strain M23) protein is tRNA uridine(34) hydroxylase.